We begin with the raw amino-acid sequence, 384 residues long: Probable endopolygalacturonase C (384 aa).

Positions 1–19 (MVRQLILISSLLAAVAVRA) are cleaved as a signal peptide. A propeptide spanning residues 20–40 (APADPAHPMVTEAPDVNLVEK) is cleaved from the precursor. Residues cysteine 45 and cysteine 63 are joined by a disulfide bond. PbH1 repeat units lie at residues 176 to 207 (STDL…DIGE) and 208 to 229 (STYI…AINS). The active-site Proton donor is aspartate 222. An intrachain disulfide couples cysteine 224 to cysteine 240. Histidine 244 is a catalytic residue. 2 PbH1 repeats span residues 254-280 (RDDN…RIKT) and 288-310 (VSEV…VIEQ). The N-linked (GlcNAc...) asparagine glycan is linked to asparagine 261. 2 cysteine pairs are disulfide-bonded: cysteine 349–cysteine 354 and cysteine 373–cysteine 382.

This sequence belongs to the glycosyl hydrolase 28 family.

The protein localises to the secreted. The enzyme catalyses (1,4-alpha-D-galacturonosyl)n+m + H2O = (1,4-alpha-D-galacturonosyl)n + (1,4-alpha-D-galacturonosyl)m.. Functionally, involved in maceration and soft-rotting of plant tissue. Hydrolyzes the 1,4-alpha glycosidic bonds of de-esterified pectate in the smooth region of the plant cell wall. The protein is Probable endopolygalacturonase C (pgaC) of Aspergillus niger (strain ATCC MYA-4892 / CBS 513.88 / FGSC A1513).